Consider the following 245-residue polypeptide: 1-(5-phosphoribosyl)-5-[(5-phosphoribosylamino)methylideneamino] imidazole-4-carboxamide isomerase (245 aa).

Catalysis depends on D7, which acts as the Proton acceptor. D129 acts as the Proton donor in catalysis.

Belongs to the HisA/HisF family.

It is found in the cytoplasm. The enzyme catalyses 1-(5-phospho-beta-D-ribosyl)-5-[(5-phospho-beta-D-ribosylamino)methylideneamino]imidazole-4-carboxamide = 5-[(5-phospho-1-deoxy-D-ribulos-1-ylimino)methylamino]-1-(5-phospho-beta-D-ribosyl)imidazole-4-carboxamide. It participates in amino-acid biosynthesis; L-histidine biosynthesis; L-histidine from 5-phospho-alpha-D-ribose 1-diphosphate: step 4/9. In Yersinia pestis bv. Antiqua (strain Antiqua), this protein is 1-(5-phosphoribosyl)-5-[(5-phosphoribosylamino)methylideneamino] imidazole-4-carboxamide isomerase.